The following is a 379-amino-acid chain: Spermidine/putrescine import ATP-binding protein PotA (379 aa).

An ABC transporter domain is found at 10-240 (VTIDQVSKAY…PATDFVAKFI (231 aa)). 42–49 (GPSGCGKT) lines the ATP pocket.

The protein belongs to the ABC transporter superfamily. Spermidine/putrescine importer (TC 3.A.1.11.1) family. The complex is composed of two ATP-binding proteins (PotA), two transmembrane proteins (PotB and PotC) and a solute-binding protein (PotD).

It is found in the cell inner membrane. The catalysed reaction is ATP + H2O + polyamine-[polyamine-binding protein]Side 1 = ADP + phosphate + polyamineSide 2 + [polyamine-binding protein]Side 1.. Its function is as follows. Part of the ABC transporter complex PotABCD involved in spermidine/putrescine import. Responsible for energy coupling to the transport system. The polypeptide is Spermidine/putrescine import ATP-binding protein PotA (Treponema pallidum (strain Nichols)).